The sequence spans 207 residues: Succinyl-CoA:3-ketoacid coenzyme A transferase subunit B (207 aa).

Glu-43 is an active-site residue.

This sequence belongs to the 3-oxoacid CoA-transferase subunit B family. As to quaternary structure, heterodimer of a subunit A and a subunit B.

The catalysed reaction is a 3-oxo acid + succinyl-CoA = a 3-oxoacyl-CoA + succinate. This Helicobacter pylori (strain ATCC 700392 / 26695) (Campylobacter pylori) protein is Succinyl-CoA:3-ketoacid coenzyme A transferase subunit B (scoB).